We begin with the raw amino-acid sequence, 271 residues long: Urease accessory protein UreD (271 aa).

The protein belongs to the UreD family. In terms of assembly, ureD, UreF and UreG form a complex that acts as a GTP-hydrolysis-dependent molecular chaperone, activating the urease apoprotein by helping to assemble the nickel containing metallocenter of UreC. The UreE protein probably delivers the nickel.

The protein resides in the cytoplasm. Its function is as follows. Required for maturation of urease via the functional incorporation of the urease nickel metallocenter. The sequence is that of Urease accessory protein UreD from Haemophilus influenzae (strain PittEE).